Reading from the N-terminus, the 780-residue chain is MATSNLLKNKGSLQFEDKWDFMRPIVLKLLRQESVTKQQWFDLFSDVHAVCLWDDKGSSKIHQALKEDILEFIKQAQARVLSHQDDTALLKAYIVEWRKFFTQCDILPKPFCQLEVTLLGKQSSNKKSNMEDSIVRKLMLDTWNESIFSNIKNRLQDSAMKLVHAERLGEAFDSQLVIGVRESYVNLCSNPEDKLQIYRDNFEKAYLDSTERFYRTQAPSYLQQNGVQNYMKYADAKLKEEEKRALRYLETRRECNSVEALMECCVNALVTSFKETILAECQGMIKRNETEKLHLMFSLMDKVPGGIEPMLKDLEEHIISAGLADMVAAAETITTDSEKYVEQLLTLFNRFSKLVKEAFQDDPRFLTARDKAYKAVVNDATIFKLELPLKQKGVGLKTQPESKCPELLANYCDMLLRKTPLSKKLTSEEIEAKLKEVLLVLKYVQNKDVFMRYHKAHLTRRLILDISADSEIEENMVEWLREVGMPADYVNKLARMFQDIKVSEDLNQAFKEMHKNNKLALPADSVNIKILNAGAWSRSSEKVFVSLPTELEDLIPEVEEFYKKNHSGRKLHWHHLMSNGIITFKNEVGQYDLEVTTFQLAVLFAWNQRPREKISFENLKLATELPDAELRRTLWSLVAFPKLKRQVLLYDPQVNSPKDFTEGTLFSVNQDFSLIKNAKVQKRGKINLIGRLQLTTERMREEENEGIVQLRILRTQEAIIQIMKMRKKISNAQLQTELVEILKNMFLPQKKMIKEQIEWLIEHKYIRRDEADINTFIYMA.

Phosphoserine is present on S34. At T210 the chain carries Phosphothreonine. The 62-residue stretch at 711 to 772 (RILRTQEAII…HKYIRRDEAD (62 aa)) folds into the Cullin neddylation domain. K724 is covalently cross-linked (Glycyl lysine isopeptide (Lys-Gly) (interchain with G-Cter in NEDD8)).

The protein belongs to the cullin family. As to quaternary structure, component of multiple cullin-5-RING E3 ubiquitin-protein ligase complexes (ECS complexes, also named CRL5 complexes) formed of CUL5, Elongin BC (ELOB and ELOC), RNF7/RBX2 and a variable SOCS box domain-containing protein as substrate-specific recognition component. CUL5-containing ECS complexes specifically contain RNF7/RBX2, and not RBX1, as catalytic subunit. Component of the ECS(ASB2) complex with the substrate recognition component ASB2. Component of the ECS(ASB6) complex with the substrate recognition component ASB6. Component of the ECS(ASB7) complex with the substrate recognition component ASB7. Component of the ECS(ASB9) complex with the substrate recognition component ASB9. Component of the ECS(ASB11) complex with the substrate recognition component ASB11. Component of the ECS(ASB12) complex with the substrate recognition component ASB12. Component of the ECS(LRRC41) complex with the substrate recognition component LRRC41. Component of the ECS(SOCS1) complex with the substrate recognition component SOCS1. Component of the ECS(SOCS2) complex with the substrate recognition component SOCS2. Component of the ECS(WSB1) complex with the substrate recognition subunit WSB1. Component of the ECS(SOCS3) complex with the substrate recognition component SOCS3. Component of the ECS(SOCS7) complex with the substrate recognition component SOCS7. Component of the ECS(SPSB1) complex with the substrate recognition component SPSB1. Component of the ECS(SPSB3) complex with the substrate recognition component SPSB3. Component of the ECS(SPSB2) complex with the substrate recognition component SPSB2. Component of the ECS(SPSB4) complex with the substrate recognition component SPSB4. Component of the ECS(RAB40) complex with the substrate recognition subunit RAB40A, RAB40B or RAB40C. Component of the ECS(KLHDC1) complex with the substrate recognition component KLHDC1. Component of the ECS(PCMTD1) complex with the substrate recognition subunit PCMTD1. May also form complexes containing RBX1 and ELOA or VHL; additional evidence is however required to confirm this result in vivo. Interacts (when neddylated) with ARIH2; leading to activate the E3 ligase activity of ARIH2. Interacts with ERCC6; the interaction is induced by DNA damaging agents or inhibitors of RNA polymerase II elongation. Interacts with ELOA (via the BC-box). Interacts (unneddylated form) with DCUN1D1, DCUN1D2, DCUN1D3, DCUN1D4 and DCUN1D5; these interactions promote the cullin neddylation. In terms of processing, neddylated; which enhances the ubiquitination activity of ECS complexes and prevents binding of the inhibitor CAND1. Deneddylated via its interaction with the COP9 signalosome (CSN).

The protein resides in the nucleus. Its pathway is protein modification; protein ubiquitination. Its function is as follows. Core component of multiple cullin-5-RING E3 ubiquitin-protein ligase complexes (ECS complexes, also named CRL5 complexes), which mediate the ubiquitination and subsequent proteasomal degradation of target proteins. Acts a scaffold protein that contributes to catalysis through positioning of the substrate and the ubiquitin-conjugating enzyme. The functional specificity of the E3 ubiquitin-protein ligase complex depends on the variable SOCS box-containing substrate recognition component. Acts as a key regulator of neuron positioning during cortex development: component of various SOCS-containing ECS complexes, such as the ECS(SOCS7) complex, that regulate reelin signaling by mediating ubiquitination and degradation of DAB1. ECS(SOCS1) seems to direct ubiquitination of JAK2. The ECS(SOCS2) complex mediates the ubiquitination and subsequent proteasomal degradation of phosphorylated EPOR and GHR. The ECS(SPSB3) complex catalyzes ubiquitination of nuclear CGAS. ECS(KLHDC1) complex is part of the DesCEND (destruction via C-end degrons) pathway and mediates ubiquitination and degradation of truncated SELENOS selenoprotein produced by failed UGA/Sec decoding, which ends with a glycine. The ECS(ASB9) complex mediates ubiquitination and degradation of CKB. As part of some ECS complex, promotes 'Lys-11'-linked ubiquitination and degradation of BTRC. As part of a multisubunit ECS complex, polyubiquitinates monoubiquitinated POLR2A. As part of the ECS(RAB40C) complex, mediates ANKRD28 ubiquitination and degradation, thereby regulating protein phosphatase 6 (PP6) complex activity and focal adhesion assembly during cell migration. As part of the ECS(RAB40A) complex, mediates RHOU 'Lys-48'-linked ubiquitination and degradation, thus inhibiting focal adhesion disassembly during cell migration. As part of the ECS(RAB40B) complex, mediates LIMA1/EPLIN and RAP2 ubiquitination, thereby regulating actin cytoskeleton dynamics and stress fiber formation during cell migration. May form a cell surface vasopressin receptor. The polypeptide is Cullin-5 (Rattus norvegicus (Rat)).